Here is a 99-residue protein sequence, read N- to C-terminus: Aspartyl/glutamyl-tRNA(Asn/Gln) amidotransferase subunit C (99 aa).

The protein belongs to the GatC family. Heterotrimer of A, B and C subunits.

The catalysed reaction is L-glutamyl-tRNA(Gln) + L-glutamine + ATP + H2O = L-glutaminyl-tRNA(Gln) + L-glutamate + ADP + phosphate + H(+). It catalyses the reaction L-aspartyl-tRNA(Asn) + L-glutamine + ATP + H2O = L-asparaginyl-tRNA(Asn) + L-glutamate + ADP + phosphate + 2 H(+). Allows the formation of correctly charged Asn-tRNA(Asn) or Gln-tRNA(Gln) through the transamidation of misacylated Asp-tRNA(Asn) or Glu-tRNA(Gln) in organisms which lack either or both of asparaginyl-tRNA or glutaminyl-tRNA synthetases. The reaction takes place in the presence of glutamine and ATP through an activated phospho-Asp-tRNA(Asn) or phospho-Glu-tRNA(Gln). This Burkholderia thailandensis (strain ATCC 700388 / DSM 13276 / CCUG 48851 / CIP 106301 / E264) protein is Aspartyl/glutamyl-tRNA(Asn/Gln) amidotransferase subunit C.